Reading from the N-terminus, the 263-residue chain is GTP cyclohydrolase 1 type 2 homolog (263 aa).

Residues histidine 65, histidine 66, aspartate 104, histidine 225, and glutamate 229 each contribute to the a divalent metal cation site.

This sequence belongs to the GTP cyclohydrolase I type 2/NIF3 family. In terms of assembly, homohexamer.

The chain is GTP cyclohydrolase 1 type 2 homolog from Nostoc sp. (strain PCC 7120 / SAG 25.82 / UTEX 2576).